Reading from the N-terminus, the 266-residue chain is Hydroxyethylthiazole kinase (266 aa).

M43 serves as a coordination point for substrate. ATP-binding residues include R119 and T166. G193 provides a ligand contact to substrate.

Belongs to the Thz kinase family. It depends on Mg(2+) as a cofactor.

It carries out the reaction 5-(2-hydroxyethyl)-4-methylthiazole + ATP = 4-methyl-5-(2-phosphooxyethyl)-thiazole + ADP + H(+). It participates in cofactor biosynthesis; thiamine diphosphate biosynthesis; 4-methyl-5-(2-phosphoethyl)-thiazole from 5-(2-hydroxyethyl)-4-methylthiazole: step 1/1. In terms of biological role, catalyzes the phosphorylation of the hydroxyl group of 4-methyl-5-beta-hydroxyethylthiazole (THZ). The chain is Hydroxyethylthiazole kinase from Methanococcus maripaludis (strain C6 / ATCC BAA-1332).